Reading from the N-terminus, the 166-residue chain is Disulfide bond reductase DsbH (166 aa).

A signal peptide spans 1–22 (MKFWLQGCAFVGCLLLTLPCCA). Residues 32–166 (LQQTRPIAAA…SKVKSALKLR (135 aa)) enclose the Thioredoxin domain. A disulfide bridge connects residues C72 and C75. Residue 73–74 (MW) coordinates substrate.

In terms of assembly, monomer.

It is found in the periplasm. Its function is as follows. Catalyzes the reduction of disulfide bonds. May function in reducing intermolecular disulfides between proteins and small molecules in the periplasm, or keeping a specific subset of periplasmic proteins reduced, or maintaining the periplasm of Chlamydia in a generally reducing state. Seems to be unable to oxidize thiols into disulfides and does not display disulfide bond isomerase activity. This chain is Disulfide bond reductase DsbH (dsbH), found in Chlamydia pneumoniae (Chlamydophila pneumoniae).